Here is a 332-residue protein sequence, read N- to C-terminus: Opticin (332 aa).

The first 19 residues, 1-19 (MRLLAFLSLLALVLQETGT), serve as a signal peptide directing secretion. The interval 21-41 (SLPRKERKRREEQMPREGDSF) is disordered. The segment covering 29–39 (RREEQMPREGD) has biased composition (basic and acidic residues). 2 positions are modified to sulfotyrosine: Y65 and Y71. The interval 86-106 (ATSISPAKSTTAPGTPSSNPT) is disordered. An LRRNT domain is found at 116 to 153 (LLSSQPNHGLPTCLVCVCLGSSVYCDDIDLEDIPPLPR). Y139 is modified (sulfotyrosine). LRR repeat units follow at residues 154–175 (RTAYLYARFNRISRIRAEDFKG), 178–199 (KLKRIDLSNNLISSIDNDAFRL), 202–223 (ALQDLILPENQLEALPVLPSGI), 248–269 (KLQFLYLSDNLLDSIPGPLPLS), 270–290 (LRSVHLQNNLIETMQRDVFCD), and 300–320 (QLEDIRLDGNPINLSLFPSAY). An intrachain disulfide couples C289 to C322. Residue N312 is glycosylated (N-linked (GlcNAc...) asparagine).

The protein belongs to the small leucine-rich proteoglycan (SLRP) family. SLRP class III subfamily. As to quaternary structure, homodimer. O-glycosylated. In terms of processing, proteolytically cleaved by MMP1, MMP2, MMP3, MMP7, MMP8, MMP9, ADAMTS4, and ADAMTS5. Proteolytically cleaved by MMP13. The degradation of OPTC by proteases may contribute to osteoarthritis pathophysiology. Post-translationally, sulfated on tyrosine residues. Expressed in cartilage and synovial membranes (at protein level). Expressed in the retina, iris, ligament, skin and fetal liver (at protein level). Expressed in the retinal pigment epithelium (at protein level). Expressed in synovial fibroblasts and subchondral bone osteoblasts.

The protein resides in the secreted. It localises to the extracellular space. Its subcellular location is the extracellular matrix. Its function is as follows. Inhibits angiogenesis in the vitreous humor of the eye, and therefore represses neovascularization. Binds collagen fibrils. May be involved in collagen fiber organization via regulation of other members of the small leucine-rich repeat proteoglycan superfamily. The sequence is that of Opticin (OPTC) from Homo sapiens (Human).